Consider the following 201-residue polypeptide: Large ribosomal subunit protein bL25 (201 aa).

It belongs to the bacterial ribosomal protein bL25 family. CTC subfamily. In terms of assembly, part of the 50S ribosomal subunit; part of the 5S rRNA/L5/L18/L25 subcomplex. Contacts the 5S rRNA. Binds to the 5S rRNA independently of L5 and L18.

Functionally, this is one of the proteins that binds to the 5S RNA in the ribosome where it forms part of the central protuberance. The chain is Large ribosomal subunit protein bL25 from Aromatoleum aromaticum (strain DSM 19018 / LMG 30748 / EbN1) (Azoarcus sp. (strain EbN1)).